We begin with the raw amino-acid sequence, 264 residues long: Thymidylate synthase (264 aa).

Arginine 21 serves as a coordination point for dUMP. Histidine 51 serves as a coordination point for (6R)-5,10-methylene-5,6,7,8-tetrahydrofolate. 126–127 (RR) lines the dUMP pocket. Cysteine 146 serves as the catalytic Nucleophile. DUMP-binding positions include 166-169 (RSAD), asparagine 177, and 207-209 (HIY). Residue aspartate 169 participates in (6R)-5,10-methylene-5,6,7,8-tetrahydrofolate binding. (6R)-5,10-methylene-5,6,7,8-tetrahydrofolate is bound at residue alanine 263.

The protein belongs to the thymidylate synthase family. Bacterial-type ThyA subfamily. As to quaternary structure, homodimer.

The protein resides in the cytoplasm. The catalysed reaction is dUMP + (6R)-5,10-methylene-5,6,7,8-tetrahydrofolate = 7,8-dihydrofolate + dTMP. It participates in pyrimidine metabolism; dTTP biosynthesis. Its function is as follows. Catalyzes the reductive methylation of 2'-deoxyuridine-5'-monophosphate (dUMP) to 2'-deoxythymidine-5'-monophosphate (dTMP) while utilizing 5,10-methylenetetrahydrofolate (mTHF) as the methyl donor and reductant in the reaction, yielding dihydrofolate (DHF) as a by-product. This enzymatic reaction provides an intracellular de novo source of dTMP, an essential precursor for DNA biosynthesis. The chain is Thymidylate synthase from Cupriavidus metallidurans (strain ATCC 43123 / DSM 2839 / NBRC 102507 / CH34) (Ralstonia metallidurans).